A 350-amino-acid polypeptide reads, in one-letter code: Putative deoxyribonuclease-2 (350 aa).

This sequence belongs to the DNase II family.

This is Putative deoxyribonuclease-2 from Burkholderia thailandensis (strain ATCC 700388 / DSM 13276 / CCUG 48851 / CIP 106301 / E264).